The following is a 355-amino-acid chain: uncharacterized protein (355 aa).

Cysteine 2 functions as the For GATase activity in the catalytic mechanism. The region spanning cysteine 2–glycine 248 is the Glutamine amidotransferase type-2 domain.

This is an uncharacterized protein from Methanocaldococcus jannaschii (strain ATCC 43067 / DSM 2661 / JAL-1 / JCM 10045 / NBRC 100440) (Methanococcus jannaschii).